The sequence spans 272 residues: Shikimate dehydrogenase (NADP(+)) (272 aa).

Shikimate-binding positions include 14–16 and threonine 61; that span reads SKS. The active-site Proton acceptor is lysine 65. An NADP(+)-binding site is contributed by glutamate 77. The shikimate site is built by asparagine 86 and aspartate 102. NADP(+) is bound by residues 126–130, 149–154, and methionine 213; these read GAGGA and NRTVSR. Shikimate is bound at residue tyrosine 215. Glycine 237 provides a ligand contact to NADP(+).

It belongs to the shikimate dehydrogenase family. As to quaternary structure, homodimer.

The enzyme catalyses shikimate + NADP(+) = 3-dehydroshikimate + NADPH + H(+). It participates in metabolic intermediate biosynthesis; chorismate biosynthesis; chorismate from D-erythrose 4-phosphate and phosphoenolpyruvate: step 4/7. Its function is as follows. Involved in the biosynthesis of the chorismate, which leads to the biosynthesis of aromatic amino acids. Catalyzes the reversible NADPH linked reduction of 3-dehydroshikimate (DHSA) to yield shikimate (SA). This chain is Shikimate dehydrogenase (NADP(+)), found in Escherichia coli O45:K1 (strain S88 / ExPEC).